We begin with the raw amino-acid sequence, 307 residues long: tRNA dimethylallyltransferase 2 (307 aa).

An ATP-binding site is contributed by 9–16 (GPTAVGKT). Residue 11–16 (TAVGKT) coordinates substrate. The interaction with substrate tRNA stretch occupies residues 34 to 37 (DSRQ).

The protein belongs to the IPP transferase family. As to quaternary structure, monomer. Mg(2+) is required as a cofactor.

The enzyme catalyses adenosine(37) in tRNA + dimethylallyl diphosphate = N(6)-dimethylallyladenosine(37) in tRNA + diphosphate. In terms of biological role, catalyzes the transfer of a dimethylallyl group onto the adenine at position 37 in tRNAs that read codons beginning with uridine, leading to the formation of N6-(dimethylallyl)adenosine (i(6)A). The sequence is that of tRNA dimethylallyltransferase 2 from Azobacteroides pseudotrichonymphae genomovar. CFP2.